Consider the following 640-residue polypeptide: Protein argonaute (640 aa).

An N-terminal domain region spans residues 1-100; it reads MYLNLYEIKI…YIKKKFIDNN (100 aa). Residues 101–153 are linker L1; the sequence is FYYKRGNNYISINDKFPLDSNTNVNAHLTYKIKLYKINERYYISVLPKFTFLS. Positions 154 to 209 are PAZ domain; sequence DKPALESPIKSTYLFNIKSGKTFPYISGLNGVLKIDLGENGIKEVLFPENYYFNFT. The tract at residues 210–291 is linker L2; the sequence is SKEAEKFGFS…KYSFYKNDQK (82 aa). Residues 292–423 are mid domain; it reads IKIAFFFSSK…YVYKMGNFIP (132 aa). The tract at residues 424–640 is PIWI domain; sequence ECQPYVIRNL…EWKLYIPYMK (217 aa). Residues Asp-445, Glu-481, Asp-515, and Asn-623 contribute to the active site. Asp-445 contributes to the Mn(2+) binding site. The Mn(2+) site is built by Asp-515 and Asn-623.

Belongs to the argonaute family. Long pAgo subfamily. Mn(2+) serves as cofactor.

In terms of biological role, a highly versatile argonaute that uses 5'-phospho- and 5'-OH- guide RNA (gRNA) or DNA (gDNA) to cleave target RNA or ssDNA (tDNA) in all possible combinations; has no detectable activity in the absence of guide. Uses short guide sequences (18-21 nucleotides (nt) on average) to bind complementary target nucleic acids resulting in target cleavage in a site-specific manner. Using 5'-phospho-gRNA or 5'-OH-gRNA the cleavage site is 10 nt downstream of the target residue base-paired with the 5'-end of the gRNA, using 5'-phospho-gDNA the cleavage site is 11 nucleotides (nt) downstream, while with 5'-OH-gDNA the cleavage site is 9 nt downstream. In Marinitoga hydrogenitolerans (strain DSM 16785 / JCM 12826 / AT1271), this protein is Protein argonaute.